A 352-amino-acid chain; its full sequence is Protein YpbB (352 aa).

In terms of assembly, interacts with RecS and SSB (ssbA); the 6 C-terminal residues of SSB are required for interaction with YpbB.

The protein resides in the cytoplasm. Its subcellular location is the nucleoid. This is Protein YpbB (ypbB) from Bacillus subtilis (strain 168).